Here is a 715-residue protein sequence, read N- to C-terminus: MTTTSAFMLNVRLDNVAVVAIDVPGEKVNTLKAEFAAQVRAILKQIRENKALQGVVFISAKADNFIAGADINMIGHCQNAQEAETLARQGQQLMAEIQALPVPVIAAIHGACLGGGLEMALACHRRICTDDVKTVLGLPEVQLGLLPGSGGTQRLPRLVGVSTALDMILTGKQLRARQALKAGLVDDVVPQTILLEAAVELAKKERLAQRTLPVRERILAGPLGRALLFRLVRKKTAQKTQGNYPATERIIDVIETGLAQGSSSGYDAEARAFGELAMTPQSQALRAVFFASTEVKKDPGSDAPPGPLNSVGILGGGLMGGGIAWVTACKGGLPVRIKDINTQGINHALKYSWDLLETKVRRRHIKASERDKQLALISGSTDYRGFSHRDLVIEAVFEDLPLKQQMVAEVEQNCAAHTIFASNTSSLPIGDIAANAARPEQVIGLHFFSPVEKMPLVEVIPHASTSAQTIATTVKLAKKQGKTPIVVSDKAGFYVNRILAPYINEAIRMLTEGERVEHIDAALVKFGFPVGPIQLLDEVGIDTGTKIIPVLEAAYGERFSAPANVVASILNDDRKGRKNGRGFYLYGEKGRKSKKQVDPAIYKLIGVQGQSRLSAQQVAERCVMLMLNEAARCFDEKVIRSARDGDIGAVFGIGFPPFLGGPFRYMDALGPGEMVATLQRLAALYGPRYAPCEQLVRMAERREHFWTNGETDQGN.

An enoyl-CoA hydratase region spans residues Met-1 to Pro-190. Residues Gly-306 to Asn-715 form a 3-hydroxyacyl-CoA dehydrogenase region.

In the N-terminal section; belongs to the enoyl-CoA hydratase/isomerase family. It in the central section; belongs to the 3-hydroxyacyl-CoA dehydrogenase family. Heterotetramer of two alpha chains (FadJ) and two beta chains (FadI).

It localises to the cytoplasm. It catalyses the reaction a (3S)-3-hydroxyacyl-CoA = a (2E)-enoyl-CoA + H2O. It carries out the reaction a 4-saturated-(3S)-3-hydroxyacyl-CoA = a (3E)-enoyl-CoA + H2O. The enzyme catalyses a (3S)-3-hydroxyacyl-CoA + NAD(+) = a 3-oxoacyl-CoA + NADH + H(+). The catalysed reaction is (3S)-3-hydroxybutanoyl-CoA = (3R)-3-hydroxybutanoyl-CoA. Its pathway is lipid metabolism; fatty acid beta-oxidation. Catalyzes the formation of a hydroxyacyl-CoA by addition of water on enoyl-CoA. Also exhibits 3-hydroxyacyl-CoA epimerase and 3-hydroxyacyl-CoA dehydrogenase activities. The polypeptide is Fatty acid oxidation complex subunit alpha (Salmonella agona (strain SL483)).